We begin with the raw amino-acid sequence, 292 residues long: tRNA dimethylallyltransferase (292 aa).

Position 5 to 12 (5 to 12 (APTGAGKT)) interacts with ATP. 7 to 12 (TGAGKT) contributes to the substrate binding site. The interval 29–32 (DSRQ) is interaction with substrate tRNA.

It belongs to the IPP transferase family. Monomer. It depends on Mg(2+) as a cofactor.

It catalyses the reaction adenosine(37) in tRNA + dimethylallyl diphosphate = N(6)-dimethylallyladenosine(37) in tRNA + diphosphate. Its function is as follows. Catalyzes the transfer of a dimethylallyl group onto the adenine at position 37 in tRNAs that read codons beginning with uridine, leading to the formation of N6-(dimethylallyl)adenosine (i(6)A). This is tRNA dimethylallyltransferase from Leptospira borgpetersenii serovar Hardjo-bovis (strain JB197).